Here is a 437-residue protein sequence, read N- to C-terminus: MSAIKVIGAGLAGAEAAWQIARQGIEVELYEMRPVQMTPAHHTGHFAELVCSNSLKGAGLDNAAGLLKEEMRRLDSLLMRVADQYAVPAGGALAVDREQFSQEITKLLQEHPLIQVHREEVKSLPQAGIAVIATGPLTAEGLAREIQKMTGEDALAFYDAAAPIVTLESINLEKAFWASRYDKGDPDYLNCPMTEEEYKRFYHELLKAETAEVKGFEKGKVFEGCMPVEVMAARGEQTLTFGPLKPVGLIDARTGQRSYAVVQLRKENRAGTLFNLVGFQTHLKWGEQQRVFRLIPGLENAEFVRFGVMHRNTFLNAPKVLKADYSLQKTPQLFFAGQITGVEGYVESTASGLVAGLNAVRRLKNLPTLIFPQETALGALARHLEGSPSVDFQPMSINYGLLPPLEVRIKAKKEKNAKISARALAKLEEFKAAEGLD.

8-13 contributes to the FAD binding site; the sequence is GAGLAG.

It belongs to the MnmG family. TrmFO subfamily. Requires FAD as cofactor.

Its subcellular location is the cytoplasm. The catalysed reaction is uridine(54) in tRNA + (6R)-5,10-methylene-5,6,7,8-tetrahydrofolate + NADH + H(+) = 5-methyluridine(54) in tRNA + (6S)-5,6,7,8-tetrahydrofolate + NAD(+). The enzyme catalyses uridine(54) in tRNA + (6R)-5,10-methylene-5,6,7,8-tetrahydrofolate + NADPH + H(+) = 5-methyluridine(54) in tRNA + (6S)-5,6,7,8-tetrahydrofolate + NADP(+). Functionally, catalyzes the folate-dependent formation of 5-methyl-uridine at position 54 (M-5-U54) in all tRNAs. This is Methylenetetrahydrofolate--tRNA-(uracil-5-)-methyltransferase TrmFO from Desulfitobacterium hafniense (strain Y51).